Here is a 314-residue protein sequence, read N- to C-terminus: Ribosomal RNA small subunit methyltransferase H (314 aa).

S-adenosyl-L-methionine-binding positions include G34–H36, D53, F82, D103, and Q110.

It belongs to the methyltransferase superfamily. RsmH family.

The protein localises to the cytoplasm. The catalysed reaction is cytidine(1402) in 16S rRNA + S-adenosyl-L-methionine = N(4)-methylcytidine(1402) in 16S rRNA + S-adenosyl-L-homocysteine + H(+). Specifically methylates the N4 position of cytidine in position 1402 (C1402) of 16S rRNA. This is Ribosomal RNA small subunit methyltransferase H from Levilactobacillus brevis (strain ATCC 367 / BCRC 12310 / CIP 105137 / JCM 1170 / LMG 11437 / NCIMB 947 / NCTC 947) (Lactobacillus brevis).